A 469-amino-acid chain; its full sequence is Sulfate adenylyltransferase subunit 1 (469 aa).

The tr-type G domain occupies 22–237 (KEVLRFITCG…LEEVPVKSEE (216 aa)). Residues 31–38 (GSVDDGKS) are G1. Residue 31–38 (GSVDDGKS) coordinates GTP. The G2 stretch occupies residues 89–93 (GITID). Residues 110-113 (DTPG) are G3. GTP-binding positions include 110-114 (DTPGH) and 165-168 (NKMD). Positions 165–168 (NKMD) are G4. The interval 202–204 (SAK) is G5.

It belongs to the TRAFAC class translation factor GTPase superfamily. Classic translation factor GTPase family. CysN/NodQ subfamily. As to quaternary structure, heterodimer composed of CysD, the smaller subunit, and CysN.

It catalyses the reaction sulfate + ATP + H(+) = adenosine 5'-phosphosulfate + diphosphate. Its pathway is sulfur metabolism; hydrogen sulfide biosynthesis; sulfite from sulfate: step 1/3. With CysD forms the ATP sulfurylase (ATPS) that catalyzes the adenylation of sulfate producing adenosine 5'-phosphosulfate (APS) and diphosphate, the first enzymatic step in sulfur assimilation pathway. APS synthesis involves the formation of a high-energy phosphoric-sulfuric acid anhydride bond driven by GTP hydrolysis by CysN coupled to ATP hydrolysis by CysD. In Methylorubrum extorquens (strain PA1) (Methylobacterium extorquens), this protein is Sulfate adenylyltransferase subunit 1.